The chain runs to 508 residues: Anthranilate synthase component 1 (508 aa).

Residues Ser49 and 282–284 (PYM) contribute to the L-tryptophan site. 317–318 (GT) is a binding site for chorismate. Glu344 contacts Mg(2+). Chorismate is bound by residues Tyr432, Arg452, 466-468 (GAG), and Gly468. Glu481 is a binding site for Mg(2+).

The protein belongs to the anthranilate synthase component I family. In terms of assembly, heterotetramer consisting of two non-identical subunits: a beta subunit (TrpG) and a large alpha subunit (TrpE). Requires Mg(2+) as cofactor.

The catalysed reaction is chorismate + L-glutamine = anthranilate + pyruvate + L-glutamate + H(+). It participates in amino-acid biosynthesis; L-tryptophan biosynthesis; L-tryptophan from chorismate: step 1/5. Feedback inhibited by tryptophan. Part of a heterotetrameric complex that catalyzes the two-step biosynthesis of anthranilate, an intermediate in the biosynthesis of L-tryptophan. In the first step, the glutamine-binding beta subunit (TrpG) of anthranilate synthase (AS) provides the glutamine amidotransferase activity which generates ammonia as a substrate that, along with chorismate, is used in the second step, catalyzed by the large alpha subunit of AS (TrpE) to produce anthranilate. In the absence of TrpG, TrpE can synthesize anthranilate directly from chorismate and high concentrations of ammonia. The protein is Anthranilate synthase component 1 (trpE) of Geobacillus stearothermophilus (Bacillus stearothermophilus).